A 416-amino-acid polypeptide reads, in one-letter code: MAEAPMAQAPTAQAPTAEAAAEAPGLRNFTINFGPQHPAAHGVLRLVLELDGEVVERVDPHIGLLHRGTEKLIEHKTYLQAIPYFDRLDYVAPMNQEHAFCLAVEKLLGIAVPRRAQLIRVLYCEIGRILSHLLNVTTQAMDVGALTPPLWGFEEREKLMMFYERASGSRMHAAYFRVGGVHQDLPPQLVADIDSWCDSFIQVVDDLETLLTDNRIFKQRNVDIGVVTLEQAWEWGFSGVMVRGSGAAWDLRKSQPYECYAEMDFDIPIGKNGDCYDRYCLRVEEMRQSIRIMKQCIAKLRAPDGQGRVAIDDNKIFPPRRGEMKRSMESLIHHFKLYTEGFRVPEGEVYVAVEAPKGEFGVYLVSDGSNKPYKCKIRAPGFAHLQAMDFICRGHLLADVSAILGSLDIVFGEVDR.

The protein belongs to the complex I 49 kDa subunit family. NDH-1 is composed of 14 different subunits. Subunits NuoB, C, D, E, F, and G constitute the peripheral sector of the complex.

The protein localises to the cell inner membrane. It carries out the reaction a quinone + NADH + 5 H(+)(in) = a quinol + NAD(+) + 4 H(+)(out). In terms of biological role, NDH-1 shuttles electrons from NADH, via FMN and iron-sulfur (Fe-S) centers, to quinones in the respiratory chain. The immediate electron acceptor for the enzyme in this species is believed to be ubiquinone. Couples the redox reaction to proton translocation (for every two electrons transferred, four hydrogen ions are translocated across the cytoplasmic membrane), and thus conserves the redox energy in a proton gradient. This is NADH-quinone oxidoreductase subunit D from Rhodopseudomonas palustris (strain BisB5).